Consider the following 606-residue polypeptide: Mitogen-activated protein kinase kinase kinase 7 (606 aa).

The interaction with MAPK8IP1 stretch occupies residues 1–300; sequence MSTASAASSS…FPGADEPLQY (300 aa). Residues 36 to 291 enclose the Protein kinase domain; sequence IEVEEVVGRG…KIMTHLMRYF (256 aa). ATP-binding positions include 42–50 and Lys63; that span reads VGRGAFGVV. Residue Lys72 forms a Glycyl lysine isopeptide (Lys-Gly) (interchain with G-Cter in ubiquitin) linkage. Catalysis depends on Asp156, which acts as the Proton acceptor. Lys158 participates in a covalent cross-link: Glycyl lysine isopeptide (Lys-Gly) (interchain with G-Cter in ubiquitin). 2 positions are modified to phosphothreonine; by autocatalysis: Thr184 and Thr187. Ser192 carries the phosphoserine; by autocatalysis modification. Lys209 is covalently cross-linked (Glycyl lysine isopeptide (Lys-Gly) (interchain with G-Cter in ubiquitin)). Disordered stretches follow at residues 301–338 and 354–391; these read PCQYSDEGQSNSATSTGSFMDIASTNTSNKSDTNMEQV and KNQAKQQSESGRLSLGASRGSSVESLPPASEGKRMSAD. Polar residues predominate over residues 306 to 338; that stretch reads DEGQSNSATSTGSFMDIASTNTSNKSDTNMEQV. The segment covering 361–375 has biased composition (low complexity); sequence SESGRLSLGASRGSS. Phosphoserine occurs at positions 367, 389, and 439. The span at 443-452 shows a compositional bias: polar residues; sequence LTVTGTEPGQ. The disordered stretch occupies residues 443–493; it reads LTVTGTEPGQVSSRSSSPSVRMITTSGPTSEKPTRSHPWTPDDSTDTNGSD. Residues 453–463 show a composition bias toward low complexity; sequence VSSRSSSPSVR. Residue Ser455 is modified to Phosphoserine. Residues 464–473 show a composition bias toward polar residues; that stretch reads MITTSGPTSE.

The protein belongs to the protein kinase superfamily. STE Ser/Thr protein kinase family. MAP kinase kinase kinase subfamily. As to quaternary structure, can form homodimer. Binds both upstream activators and downstream substrates in multimolecular complexes. Interacts with TAB1/MAP3K7IP1, TAB2/MAP3K7IP2 and TAB3/MAP3K7IP3. Identified in the TRIKA2 complex composed of MAP3K7/TAK1, TAB1/MAP3K7IP1 and TAB2/MAP3K7IP2. Interacts with PPM1L and PPM1B/PP2CB. Interaction with PP2A and PPP6C leads to its repressed activity. Interacts with TRAF6 and TAB1/MAP3K7IP1; during IL-1 signaling. Interacts with TAOK1 and TAOK2; interaction with TAOK2 interferes with MAP3K7 interaction with IKKA, thus preventing NF-kappa-B activation. Interacts with DYNC2I2 (via WD domains). Interacts with CYLD and RBCK1. Interacts with TGFBR1; induces MAP3K7/TAK1 activation by TRAF6. Interacts with MAPK8IP1 and SMAD6. Interacts with isoform 1 of VRK2. Interacts with DAB2; the interaction is induced by TGF-beta stimulation and may mediate TGF-beta stimulated JNK activation. Interacts with TRIM5. Part of a complex containing ITCH, NDFIP1 and MAP3K7. Interacts with IFIT5; the interaction synergizes the recruitment of IKK to MAP3K7 and enhances IKK phosphorylation. Interacts with PLEKHM1 (via N- and C-terminus). Found in a complex with SH3RF1, RAC2, MAP2K7/MKK7, MAPK8IP1/JIP1, MAPK8/JNK1 and MAPK9/JNK2. Interacts with SASH1. Interacts with RIPK1. Mg(2+) is required as a cofactor. Post-translationally, association with TAB1/MAP3K7IP1 promotes autophosphorylation at Ser-192 and subsequent activation. Association with TAB2/MAP3K7IP2, itself associated with free unanchored Lys-63 polyubiquitin chain, promotes autophosphorylation and subsequent activation of MAP3K7. Dephosphorylation at Ser-192 by PPM1B/PP2CB and at Thr-187 by PP2A and PPP6C leads to inactivation. In terms of processing, 'Lys-48'-linked polyubiquitination at Lys-72 is induced by TNFalpha, and leads to proteasomal degradation. Undergoes 'Lys-48'-linked polyubiquitination catalyzed by ITCH. 'Lys-63'-linked polyubiquitination at Lys-158 by TRIM8 does not lead to proteasomal degradation but contributes to autophosphorylation and activation. Deubiquitinated by CYLD, a protease that selectively cleaves 'Lys-63'-linked ubiquitin chains. Deubiquitinated by USP19; leading to negative regulation of TNF-alpha- and IL-1beta-triggered NF-kappa-B activation.

It is found in the cytoplasm. Its subcellular location is the cell membrane. It catalyses the reaction L-seryl-[protein] + ATP = O-phospho-L-seryl-[protein] + ADP + H(+). The enzyme catalyses L-threonyl-[protein] + ATP = O-phospho-L-threonyl-[protein] + ADP + H(+). With respect to regulation, activated by pro-inflammatory cytokines and in response to physical and chemical stresses, including osmotic stress, oxidative stress, arsenic and ultraviolet light irradiation. Activated by 'Lys-63'-linked polyubiquitination and by autophosphorylation. Association with TAB1/MAP3K7IP1 and TAB2/MAP3K7IP2 promotes activation through autophosphorylation, whereas PPM1B/PP2CB, PP2A and PPP6C dephosphorylation leads to inactivation. Ceramides are also able to activate MAP3K7/TAK1. In terms of biological role, serine/threonine kinase which acts as an essential component of the MAP kinase signal transduction pathway. Plays an important role in the cascades of cellular responses evoked by changes in the environment. Mediates signal transduction of TRAF6, various cytokines including interleukin-1 (IL-1), transforming growth factor-beta (TGFB), TGFB-related factors like BMP2 and BMP4, toll-like receptors (TLR), tumor necrosis factor receptor CD40 and B-cell receptor (BCR). Once activated, acts as an upstream activator of the MKK/JNK signal transduction cascade and the p38 MAPK signal transduction cascade through the phosphorylation and activation of several MAP kinase kinases like MAP2K1/MEK1, MAP2K3/MKK3, MAP2K6/MKK6 and MAP2K7/MKK7. These MAP2Ks in turn activate p38 MAPKs and c-jun N-terminal kinases (JNKs); both p38 MAPK and JNK pathways control the transcription factors activator protein-1 (AP-1). Independently of MAP2Ks and p38 MAPKs, acts as a key activator of NF-kappa-B by promoting activation of the I-kappa-B-kinase (IKK) core complex. Mechanistically, recruited to polyubiquitin chains of RIPK2 and IKBKG/NEMO via TAB2/MAP3K7IP2 and TAB3/MAP3K7IP3, and catalyzes phosphorylation and activation of IKBKB/IKKB component of the IKK complex, leading to NF-kappa-B activation. In osmotic stress signaling, plays a major role in the activation of MAPK8/JNK1, but not that of NF-kappa-B. Promotes TRIM5 capsid-specific restriction activity. Phosphorylates RIPK1 at 'Ser-321' which positively regulates RIPK1 interaction with RIPK3 to promote necroptosis but negatively regulates RIPK1 kinase activity and its interaction with FADD to mediate apoptosis. Phosphorylates STING1 in response to cGAMP-activation, promoting association between STEEP1 and STING1 and STING1 translocation to COPII vesicles. This Pongo abelii (Sumatran orangutan) protein is Mitogen-activated protein kinase kinase kinase 7 (MAP3K7).